Here is a 245-residue protein sequence, read N- to C-terminus: Eukaryotic translation initiation factor 6 (245 aa).

It belongs to the eIF-6 family. As to quaternary structure, monomer. Associates with the 60S ribosomal subunit.

The protein localises to the cytoplasm. The protein resides in the nucleus. It localises to the nucleolus. Functionally, binds to the 60S ribosomal subunit and prevents its association with the 40S ribosomal subunit to form the 80S initiation complex in the cytoplasm. May also be involved in ribosome biogenesis. The chain is Eukaryotic translation initiation factor 6 from Drosophila melanogaster (Fruit fly).